A 149-amino-acid polypeptide reads, in one-letter code: Calmodulin (149 aa).

Residue Ala-2 is modified to N-acetylalanine. 4 consecutive EF-hand domains span residues 8-43 (EQIA…LGQN), 44-79 (PTEA…KMKD), 81-116 (DSEE…LGEK), and 117-149 (LTDE…MTAK). Positions 21, 23, 25, 27, 32, 59, 61, 63, 68, 94, 96, 98, 100, and 105 each coordinate Ca(2+). Lys-116 is subject to N6,N6,N6-trimethyllysine. Residues Asp-130, Asp-132, Asp-134, Gln-136, and Glu-141 each contribute to the Ca(2+) site.

This sequence belongs to the calmodulin family.

Functionally, calmodulin acts as part of a calcium signal transduction pathway by mediating the control of a large number of enzymes, ion channels, aquaporins and other proteins through calcium-binding. Calcium-binding is required for the activation of calmodulin. Among the enzymes to be stimulated by the calmodulin-calcium complex are a number of protein kinases, such as myosin light-chain kinases and calmodulin-dependent protein kinase type II (CaMK2), and phosphatases. This Myxine glutinosa (Atlantic hagfish) protein is Calmodulin.